A 50-amino-acid chain; its full sequence is Large ribosomal subunit protein bL33 (50 aa).

It belongs to the bacterial ribosomal protein bL33 family.

The polypeptide is Large ribosomal subunit protein bL33 (Mycoplasmopsis synoviae (strain 53) (Mycoplasma synoviae)).